The sequence spans 404 residues: G1/S-specific cyclin-E2 (404 aa).

Residues 1–44 (MSRRSSRLQAKQQPQPSQTESPQEAQIIQAKKRKTTQDVKKRRE) are disordered. Residues 12–26 (QQPQPSQTESPQEAQ) are compositionally biased toward low complexity. Serine 21 carries the phosphoserine modification. Over residues 35-44 (TTQDVKKRRE) the composition is skewed to basic and acidic residues. N6-lactoyllysine is present on lysine 348. Serine 383 is modified (phosphoserine). Threonine 392 bears the Phosphothreonine mark.

This sequence belongs to the cyclin family. Cyclin E subfamily. In terms of assembly, interacts with the CDK2 (in vivo) and CDK3 (in vitro) protein kinases to form a serine/threonine kinase holoenzyme complex. The cyclin subunit imparts substrate specificity to the complex. Phosphorylation by CDK2 triggers its release from CDK2 and degradation via the ubiquitin proteasome pathway. Post-translationally, lactylated at Lys-348. Delactylated by SIRT3. In terms of tissue distribution, according to PubMed:9858585, highest levels of expression in adult testis, thymus and brain. Lower levels in placenta, spleen and colon. Consistently elevated levels in tumor-derived cells compared to non-transformed proliferating cells. According to PubMed:9840927: low levels in thymus, prostate, brain, skeletal muscle, and kidney. Elevated levels in lung. According to PubMed:9840943 highly expressed in testis, placenta, thymus and brain. In a lesser extent in small intestine and colon.

Its subcellular location is the nucleus. Its function is as follows. Essential for the control of the cell cycle at the late G1 and early S phase. The sequence is that of G1/S-specific cyclin-E2 (CCNE2) from Homo sapiens (Human).